A 342-amino-acid chain; its full sequence is Glyceraldehyde-3-phosphate dehydrogenase (342 aa).

Residues 12–13 (RI), Asp-34, Lys-78, and Thr-120 each bind NAD(+). Residues 151 to 153 (SCT) and Thr-182 each bind D-glyceraldehyde 3-phosphate. Cys-152 (nucleophile) is an active-site residue. NAD(+) is bound at residue Asn-183. Residues Arg-197, 210–211 (TG), and Arg-233 contribute to the D-glyceraldehyde 3-phosphate site. Asn-322 provides a ligand contact to NAD(+).

The protein belongs to the glyceraldehyde-3-phosphate dehydrogenase family. As to quaternary structure, homotetramer.

It is found in the cytoplasm. The enzyme catalyses D-glyceraldehyde 3-phosphate + phosphate + NAD(+) = (2R)-3-phospho-glyceroyl phosphate + NADH + H(+). It functions in the pathway carbohydrate degradation; glycolysis; pyruvate from D-glyceraldehyde 3-phosphate: step 1/5. Functionally, catalyzes the oxidative phosphorylation of glyceraldehyde 3-phosphate (G3P) to 1,3-bisphosphoglycerate (BPG) using the cofactor NAD. The first reaction step involves the formation of a hemiacetal intermediate between G3P and a cysteine residue, and this hemiacetal intermediate is then oxidized to a thioester, with concomitant reduction of NAD to NADH. The reduced NADH is then exchanged with the second NAD, and the thioester is attacked by a nucleophilic inorganic phosphate to produce BPG. In Aquifex aeolicus (strain VF5), this protein is Glyceraldehyde-3-phosphate dehydrogenase (gap).